We begin with the raw amino-acid sequence, 615 residues long: Isocitrate dehydrogenase kinase/phosphatase (615 aa).

Residues 328 to 334 (APGIRGL) and Lys-349 contribute to the ATP site. Residue Asp-384 is part of the active site. Positions 595 to 615 (AEPPATPPVKQPDAGPARRVA) are disordered.

Belongs to the AceK family.

It localises to the cytoplasm. It carries out the reaction L-seryl-[isocitrate dehydrogenase] + ATP = O-phospho-L-seryl-[isocitrate dehydrogenase] + ADP + H(+). Bifunctional enzyme which can phosphorylate or dephosphorylate isocitrate dehydrogenase (IDH) on a specific serine residue. This is a regulatory mechanism which enables bacteria to bypass the Krebs cycle via the glyoxylate shunt in response to the source of carbon. When bacteria are grown on glucose, IDH is fully active and unphosphorylated, but when grown on acetate or ethanol, the activity of IDH declines drastically concomitant with its phosphorylation. The chain is Isocitrate dehydrogenase kinase/phosphatase from Cupriavidus taiwanensis (strain DSM 17343 / BCRC 17206 / CCUG 44338 / CIP 107171 / LMG 19424 / R1) (Ralstonia taiwanensis (strain LMG 19424)).